Consider the following 544-residue polypeptide: Tyrosine-protein kinase fynb (544 aa).

The N-myristoyl glycine moiety is linked to residue Gly2. 2 S-palmitoyl cysteine lipidation sites follow: Cys3 and Cys6. The region spanning 89–150 (TGVTLFVALY…PSNYVAPVDS (62 aa)) is the SH3 domain. The SH2 domain occupies 156-253 (WYFGKLGRKD…GLCCRLVVPC (98 aa)). The region spanning 278–531 (LQLIKRLGNG…YLQAFLEDYF (254 aa)) is the Protein kinase domain. Residues 284 to 292 (LGNGQFGEV) and Lys306 each bind ATP. Asp397 (proton acceptor) is an active-site residue. A Phosphotyrosine; by autocatalysis modification is found at Tyr427. Residue Tyr538 is modified to Phosphotyrosine.

The protein belongs to the protein kinase superfamily. Tyr protein kinase family. SRC subfamily. Mn(2+) is required as a cofactor.

The protein localises to the cytoplasm. The catalysed reaction is L-tyrosyl-[protein] + ATP = O-phospho-L-tyrosyl-[protein] + ADP + H(+). Its activity is regulated as follows. Inhibited by phosphorylation of Tyr-538 by leukocyte common antigen and activated by dephosphorylation of this site. Tyrosine-protein kinase implicated in the control of cell growth. Plays a role in the regulation of intracellular calcium levels. Required in brain development and mature brain function with important roles in the regulation of axon growth, axon guidance, and neurite extension. Role in CNTN1-mediated signaling. The protein is Tyrosine-protein kinase fynb (fynb) of Danio rerio (Zebrafish).